The primary structure comprises 173 residues: Peptidyl-prolyl cis-trans isomerase cyp3 (173 aa).

The region spanning 8 to 172 is the PPIase cyclophilin-type domain; the sequence is FMDIAIDGRL…SNVAIVECGE (165 aa).

It belongs to the cyclophilin-type PPIase family. PPIase H subfamily.

It is found in the cytoplasm. Its subcellular location is the cytoskeleton. It localises to the microtubule organizing center. The protein resides in the spindle pole body. It catalyses the reaction [protein]-peptidylproline (omega=180) = [protein]-peptidylproline (omega=0). Its function is as follows. PPIases accelerate the folding of proteins. It catalyzes the cis-trans isomerization of proline imidic peptide bonds in oligopeptides. The protein is Peptidyl-prolyl cis-trans isomerase cyp3 (cyp3) of Schizosaccharomyces pombe (strain 972 / ATCC 24843) (Fission yeast).